Consider the following 128-residue polypeptide: Ig kappa chain V-V region T1 (128 aa).

The first 20 residues, 1–20 (MRTPAQFLGILLLWFPGIKC), serve as a signal peptide directing secretion. Residues 21 to 43 (DIKMTQSPSSMYASLGERVTISC) are framework-1. Cysteine 43 and cysteine 108 are oxidised to a cystine. The segment at 44-54 (KASQDINSYLT) is complementarity-determining-1. The framework-2 stretch occupies residues 55-69 (WFQQKPGKSPKTLLY). Positions 70–76 (RANRLVD) are complementarity-determining-2. The framework-3 stretch occupies residues 77 to 108 (GVPSRFSGSGSGQDFSLTISSLEYEDMGIYYC). Residues 109–117 (LQYDEFPLT) form a complementarity-determining-3 region. The tract at residues 118-127 (FGAGTKLELK) is framework-4.

In Mus musculus (Mouse), this protein is Ig kappa chain V-V region T1.